A 501-amino-acid chain; its full sequence is uncharacterized protein (501 aa).

The active-site Proton donor is E236. The Nucleophile role is filled by E333.

It belongs to the glycosyl hydrolase 5 (cellulase A) family.

Its subcellular location is the mitochondrion intermembrane space. This is an uncharacterized protein from Saccharomyces cerevisiae (strain ATCC 204508 / S288c) (Baker's yeast).